The chain runs to 553 residues: MAFEDVAVYFSQEEWGLLDTAQRALYRRVMLDNFALVASLGLSTSRPRVVIQLERGEEPWVPSGTDTTLSRTTYRRRNPGSWSLTEDRDVSGEWPRAFPDTPPGMTTSVFPVAGACHSVKSLQRQRGASPSRERKPTGVSVIYWERLLLGSGSGQASVSLRLTSPLRPPEGVRLREKTLTEHALLGRQPRTPERQKPCAQEVPGRTFGSAQDLEAAGGRGHHRMGAVWQEPHRLLGGQEPSTWDELGEALHAGEKSFECRACSKVFVKSSDLLKHLRTHTGERPYECAQCGKAFSQTSHLTQHQRIHSGETPYACPVCGKAFRHSSSLVRHQRIHTAEKSFRCSECGKAFSHGSNLSQHRKIHAGGRPYACAQCGRRFCRNSHLIQHERTHTGEKPFVCALCGAAFSQGSSLFKHQRVHTGEKPFACPQCGRAFSHSSNLTQHQLLHTGERPFRCVDCGKAFAKGAVLLSHRRIHTGEKPFVCTQCGRAFRERPALFHHQRIHTGEKTVRRSRASLHPQARSVAGASSEGAPAKETEPTPASGPAAVSQPAEV.

The KRAB domain maps to 1–72 (MAFEDVAVYF…SGTDTTLSRT (72 aa)). The short motif at 130-135 (PSRERK) is the Nuclear localization signal element. The disordered stretch occupies residues 186–221 (GRQPRTPERQKPCAQEVPGRTFGSAQDLEAAGGRGH). 9 C2H2-type zinc fingers span residues 257-279 (FECR…LRTH), 285-307 (YECA…QRIH), 313-335 (YACP…QRIH), 341-363 (FRCS…RKIH), 369-391 (YACA…ERTH), 397-419 (FVCA…QRVH), 425-447 (FACP…QLLH), 453-475 (FRCV…RRIH), and 481-503 (FVCT…QRIH). The tract at residues 502-553 (IHTGEKTVRRSRASLHPQARSVAGASSEGAPAKETEPTPASGPAAVSQPAEV) is disordered.

The protein belongs to the krueppel C2H2-type zinc-finger protein family. As to expression, expressed at high levels in the spleen, thymus, and PBMC, at low levels in the prostate, ovary, small intestine, colon (mucosal lining), placenta, lung, and pancreas, and very weakly expressed in the liver and kidney.

Its subcellular location is the nucleus. Functionally, may be involved in transcriptional regulation. May be involved in regulation of cell proliferation. This Homo sapiens (Human) protein is Zinc finger protein 324A (ZNF324).